The primary structure comprises 470 residues: Putative multidrug resistance protein MdtD (470 aa).

Residues 1-11 are Periplasmic-facing; the sequence is MTEFPDNTRWQ. The chain crosses the membrane as a helical span at residues 12–32; that stretch reads LWIVAFGFFMQSLDTTIVNTA. Residues 33–48 are Cytoplasmic-facing; it reads LPSMAKSLGESPLHMH. A helical transmembrane segment spans residues 49 to 69; that stretch reads MVVVSYVLTVAVMLPASGWLA. The Periplasmic segment spans residues 70 to 76; the sequence is DKIGVRN. A helical transmembrane segment spans residues 77–97; sequence IFFAAIVLFTLGSLFCALSGT. Over 98–101 the chain is Cytoplasmic; it reads LNQL. The helical transmembrane segment at 102–124 threads the bilayer; sequence VLARVLQGVGGAMMVPVGRLTVM. At 125-137 the chain is on the periplasmic side; the sequence is KIVPRAQYMAAMT. A helical transmembrane segment spans residues 138-158; sequence FVALPGQIGPLLGPALGGVLV. Residues 159–164 are Cytoplasmic-facing; that stretch reads EYASWH. The chain crosses the membrane as a helical span at residues 165–185; that stretch reads WIFLINIPVGIVGAMATFMLM. The Periplasmic portion of the chain corresponds to 186 to 196; that stretch reads PNYTIETRRFD. The chain crosses the membrane as a helical span at residues 197-217; that stretch reads LPGFLLLAIGMAVLTLALDGS. Over 218–224 the chain is Cytoplasmic; that stretch reads KSMGISP. The helical transmembrane segment at 225 to 245 threads the bilayer; the sequence is WTLAGLAAGGAAAILLYLFHA. Over 246-262 the chain is Periplasmic; it reads KKNSGALFSLRLFRTPT. Residues 263-283 form a helical membrane-spanning segment; that stretch reads FSLGLLGSFAGRIGSGMLPFM. Residues 284–285 are Cytoplasmic-facing; that stretch reads TP. Residues 286 to 306 form a helical membrane-spanning segment; it reads VFLQIGLGFSPFHAGLMMIPM. Residues 307–341 lie on the Periplasmic side of the membrane; sequence VLGSMGMKRIVVQIVNRFGYRRVLVATTLGLALVS. The helical transmembrane segment at 342–362 threads the bilayer; that stretch reads LLFMSVALLGWYYLLPLVLLL. The Cytoplasmic segment spans residues 363–395; it reads QGMVNSARFSSMNTLTLKDLPDTLASSGNSLLS. A helical transmembrane segment spans residues 396-416; sequence MIMQLSMSIGVTIAGMLLGMF. Topologically, residues 417–430 are periplasmic; the sequence is GQQHIGIDSSATHH. A helical transmembrane segment spans residues 431 to 451; it reads VFMYTWLCMAVIIALPAIIFA. At 452–470 the chain is on the cytoplasmic side; it reads RVPNDTQQNMVISRRKRSL.

Belongs to the major facilitator superfamily. TCR/Tet family.

Its subcellular location is the cell inner membrane. This is Putative multidrug resistance protein MdtD from Salmonella typhi.